The primary structure comprises 545 residues: Glucose-6-phosphate isomerase (545 aa).

Residue Glu351 is the Proton donor of the active site. Catalysis depends on residues His382 and Lys510.

It belongs to the GPI family.

It localises to the cytoplasm. It catalyses the reaction alpha-D-glucose 6-phosphate = beta-D-fructose 6-phosphate. The protein operates within carbohydrate biosynthesis; gluconeogenesis. It participates in carbohydrate degradation; glycolysis; D-glyceraldehyde 3-phosphate and glycerone phosphate from D-glucose: step 2/4. In terms of biological role, catalyzes the reversible isomerization of glucose-6-phosphate to fructose-6-phosphate. This is Glucose-6-phosphate isomerase from Shewanella loihica (strain ATCC BAA-1088 / PV-4).